Here is a 143-residue protein sequence, read N- to C-terminus: Snake venom vascular endothelial growth factor toxin (143 aa).

An N-terminal signal peptide occupies residues 1–24 (MAAYLLAVAILFCIQGWPSATVQG). Pyrrolidone carboxylic acid is present on Q25. 3 disulfides stabilise this stretch: C38/C80, C69/C115, and C73/C117. A disordered region spans residues 115 to 143 (CECRPRSPGDVNNGRNPEEGEPRARFPFV). Basic and acidic residues predominate over residues 130–143 (NPEEGEPRARFPFV).

This sequence belongs to the PDGF/VEGF growth factor family. Snake venom VEGF subfamily. In terms of assembly, homodimer; disulfide-linked. Interacts with VEGF receptor-2 (KDR). The N-terminus is blocked for N-terminal sequencing, suggesting a Pyrrolidone carboxylic acid at Gln-25. As to expression, expressed by the venom gland.

Its subcellular location is the secreted. Functionally, snake venom VEGFs that may contribute to venom dispersion and prey subjugation by inducing vascular permeability and hypotension. This protein induces an increase in capillary permeability when intradermally injected into mice. Also provokes a drastic hypotensive effect after intravenous injection. The hypotension is mediated by nitric oxide (NO), which is produced by VEGF-activated endothelium NO synthase. Also induces angiogenesis in vitro. Unlike other crotalid VEGFs, this protein interacts with VEGF receptor-2 (KDR) with a high affinity (Kd=413 pM), whereas no interaction is detected with VEGF receptor-1 (FLT1). This chain is Snake venom vascular endothelial growth factor toxin, found in Protobothrops jerdonii (Jerdon's pitviper).